The following is a 679-amino-acid chain: Genome polyprotein (679 aa).

Positions 1–14 (SAGMIIMLIPTVMA) are cleaved as a propeptide — ER anchor for the capsid protein C, removed in mature form by serine protease NS3. The helical transmembrane segment at 2–22 (AGMIIMLIPTVMAFHLTTRNG) threads the bilayer. Residues 23 to 138 (EPHMIVSRQE…GAWKHAQRIE (116 aa)) are Extracellular-facing. Asparagine 83 carries an N-linked (GlcNAc...) asparagine; by host glycan. Residues 139–159 (IWILRHPGFTIMAAILAYTIG) traverse the membrane as a helical segment. The Cytoplasmic portion of the chain corresponds to 160 to 165 (TTHFQR). Residues 166-180 (ALIFILLTAVAPSMT) form a helical membrane-spanning segment. The Extracellular portion of the chain corresponds to 181 to 625 (MRCIGISNRD…LHQVFGAIYG (445 aa)). 4 disulfides stabilise this stretch: cysteine 183/cysteine 210, cysteine 240/cysteine 301, cysteine 254/cysteine 285, and cysteine 272/cysteine 296. N-linked (GlcNAc...) asparagine; by host glycosylation is present at asparagine 247. Positions 278–291 (DRGWGNGCGLFGKG) are fusion peptide. N-linked (GlcNAc...) asparagine; by host glycosylation occurs at asparagine 333. 2 disulfides stabilise this stretch: cysteine 365-cysteine 465 and cysteine 482-cysteine 513. A helical transmembrane segment spans residues 626 to 646 (AAFSGVSWTMKILIGVIITWI). The Cytoplasmic segment spans residues 647 to 652 (GMNSRS). The chain crosses the membrane as a helical span at residues 653–673 (TSLSVSLVLVGIVTLYLGVMV). Residues 674–679 (QADSGC) are Extracellular-facing.

In terms of assembly, forms heterodimers with envelope protein E in the endoplasmic reticulum and Golgi. Homodimer; in the endoplasmic reticulum and Golgi. Interacts with protein prM. Interacts with non-structural protein 1. In terms of processing, cleaved in post-Golgi vesicles by a host furin, releasing the mature small envelope protein M, and peptide pr. This cleavage is incomplete as up to 30% of viral particles still carry uncleaved prM. Post-translationally, N-glycosylated. N-glycosylated. The excreted form is glycosylated and this is required for efficient secretion of the protein from infected cells. In terms of processing, specific enzymatic cleavages in vivo yield mature proteins. Cleavages in the lumen of endoplasmic reticulum are performed by host signal peptidase, wereas cleavages in the cytoplasmic side are performed by serine protease NS3. Signal cleavage at the 2K-4B site requires a prior NS3 protease-mediated cleavage at the 4A-2K site.

Its subcellular location is the secreted. It is found in the virion membrane. The protein localises to the host endoplasmic reticulum membrane. In terms of biological role, prevents premature fusion activity of envelope proteins in trans-Golgi by binding to envelope protein E at pH6.0. After virion release in extracellular space, gets dissociated from E dimers. Functionally, acts as a chaperone for envelope protein E during intracellular virion assembly by masking and inactivating envelope protein E fusion peptide. prM is the only viral peptide matured by host furin in the trans-Golgi network probably to avoid catastrophic activation of the viral fusion activity in acidic Golgi compartment prior to virion release. prM-E cleavage is inefficient, and many virions are only partially matured. These uncleaved prM would play a role in immune evasion. May play a role in virus budding. Exerts cytotoxic effects by activating a mitochondrial apoptotic pathway through M ectodomain. May display a viroporin activity. Its function is as follows. Binds to host cell surface receptor and mediates fusion between viral and cellular membranes. Envelope protein is synthesized in the endoplasmic reticulum in the form of heterodimer with protein prM. They play a role in virion budding in the ER, and the newly formed immature particle is covered with 60 spikes composed of heterodimer between precursor prM and envelope protein E. The virion is transported to the Golgi apparatus where the low pH causes dissociation of PrM-E heterodimers and formation of E homodimers. prM-E cleavage is inefficient, and many virions are only partially matured. These uncleaved prM would play a role in immune evasion. In terms of biological role, involved in immune evasion, pathogenesis and viral replication. Once cleaved off the polyprotein, is targeted to three destinations: the viral replication cycle, the plasma membrane and the extracellular compartment. Essential for viral replication. Required for formation of the replication complex and recruitment of other non-structural proteins to the ER-derived membrane structures. Excreted as a hexameric lipoparticle that plays a role against host immune response. Antagonizing the complement function. Binds to the host macrophages and dendritic cells. Inhibits signal transduction originating from Toll-like receptor 3 (TLR3). Functionally, disrupts the host endothelial glycocalyx layer of host pulmonary microvascular endothelial cells, inducing degradation of sialic acid and shedding of heparan sulfate proteoglycans. NS1 induces expression of sialidases, heparanase, and activates cathepsin L, which activates heparanase via enzymatic cleavage. These effects are probably linked to the endothelial hyperpermeability observed in severe dengue disease. This Dengue virus type 2 (strain Thailand/PUO-218/1980) (DENV-2) protein is Genome polyprotein.